The chain runs to 874 residues: Cyanophycin synthetase (874 aa).

Residues 224–480 (KTTLAEAGIP…VAAPVIDMLF (257 aa)) form the ATP-grasp domain. Position 495–501 (495–501 (GTNGKTT)) interacts with ATP.

The protein in the C-terminal section; belongs to the MurCDEF family. As to quaternary structure, homodimer.

The catalysed reaction is [L-4-(L-arginin-2-N-yl)aspartate](n) + L-aspartate + ATP = [L-4-(L-arginin-2-N-yl)aspartate](n)-L-aspartate + ADP + phosphate + H(+). It catalyses the reaction [L-4-(L-arginin-2-N-yl)aspartate](n)-L-aspartate + L-arginine + ATP = [L-4-(L-arginin-2-N-yl)aspartate](n+1) + ADP + phosphate + H(+). Catalyzes the ATP-dependent polymerization of arginine and aspartate to multi-L-arginyl-poly-L-aspartic acid (cyanophycin; a water-insoluble reserve polymer). This Geminocystis herdmanii (strain PCC 6308) (Synechocystis sp. (strain PCC 6308)) protein is Cyanophycin synthetase (cphA).